A 537-amino-acid polypeptide reads, in one-letter code: ATP synthase subunit alpha (537 aa).

An ATP-binding site is contributed by Gly-174 to Thr-181.

The protein belongs to the ATPase alpha/beta chains family. F-type ATPases have 2 components, CF(1) - the catalytic core - and CF(0) - the membrane proton channel. CF(1) has five subunits: alpha(3), beta(3), gamma(1), delta(1), epsilon(1). CF(0) has three main subunits: a(1), b(2) and c(9-12). The alpha and beta chains form an alternating ring which encloses part of the gamma chain. CF(1) is attached to CF(0) by a central stalk formed by the gamma and epsilon chains, while a peripheral stalk is formed by the delta and b chains.

The protein localises to the cell inner membrane. The enzyme catalyses ATP + H2O + 4 H(+)(in) = ADP + phosphate + 5 H(+)(out). In terms of biological role, produces ATP from ADP in the presence of a proton gradient across the membrane. The alpha chain is a regulatory subunit. This Verminephrobacter eiseniae (strain EF01-2) protein is ATP synthase subunit alpha.